The primary structure comprises 322 residues: MAKSKTKHRLCSRESSVSSLLASCSLSDSNSSNSDGSYHYKDKLYRSASQALQAYIDDFDLSQMYPGTSTGKINIDEDFTNMSQFCNYIYKPNNAFENLDHKKHSNFISCRRQTINDIDSMSLTTDDLLRLPADGSFSYTYVGPSHRTNKKNKKCHGRLGSSDVEKNPNFQGPSTPVGDKIELLILKAKRNLEQCTEELPKSMKKDDSPCSLDKLEAERSWENIPVTFKSPIPVNSDDSPQQTSRAKSATGVLEDFLNNDNQSCTLSGGKHHGPVEALKQMLFNLQAVQERFNQNKATEPKEEIKQVSEDDFSKLQLKERQF.

The first 31 residues, 1–31, serve as a signal peptide directing secretion; the sequence is MAKSKTKHRLCSRESSVSSLLASCSLSDSNS. Positions 148–157 are enriched in basic residues; that stretch reads TNKKNKKCHG. 2 disordered regions span residues 148–175 and 228–248; these read TNKK…GPST and FKSP…RAKS. A Phosphoserine modification is found at Ser-161. A compositionally biased stretch (polar residues) spans 236–247; it reads SDDSPQQTSRAK.

It is found in the secreted. Its function is as follows. Might play a role in cell proliferation. The sequence is that of Lung adenoma susceptibility protein 2 homolog (LAS2) from Macaca fascicularis (Crab-eating macaque).